The chain runs to 399 residues: uncharacterized protein (399 aa).

The interval 375 to 399 (AAGGHRGSHGKSEQAATVRVVDDRR) is disordered.

The protein belongs to the mycobacterial PPE family.

This is an uncharacterized protein from Mycobacterium tuberculosis (strain CDC 1551 / Oshkosh).